Reading from the N-terminus, the 218-residue chain is Histone chaperone ASF1B (218 aa).

It belongs to the ASF1 family. Interacts with histone H3 and histone H4. Interacts strongly with the N-terminus of TOUSLED. Phosphorylated in vitro by TOUSLED.

Its subcellular location is the nucleus. Histone chaperone that facilitates histone deposition and histone exchange and removal during nucleosome assembly and disassembly. The chain is Histone chaperone ASF1B (ASF1B) from Arabidopsis thaliana (Mouse-ear cress).